Consider the following 212-residue polypeptide: LexA repressor (212 aa).

Residues 29–49 constitute a DNA-binding region (H-T-H motif); sequence VREIGEAVGLSSSSTIHGHIE. Residues Ser133 and Lys171 each act as for autocatalytic cleavage activity in the active site.

Belongs to the peptidase S24 family. Homodimer.

It catalyses the reaction Hydrolysis of Ala-|-Gly bond in repressor LexA.. Functionally, represses a number of genes involved in the response to DNA damage (SOS response), including recA and lexA. In the presence of single-stranded DNA, RecA interacts with LexA causing an autocatalytic cleavage which disrupts the DNA-binding part of LexA, leading to derepression of the SOS regulon and eventually DNA repair. The sequence is that of LexA repressor from Leuconostoc mesenteroides subsp. mesenteroides (strain ATCC 8293 / DSM 20343 / BCRC 11652 / CCM 1803 / JCM 6124 / NCDO 523 / NBRC 100496 / NCIMB 8023 / NCTC 12954 / NRRL B-1118 / 37Y).